Consider the following 448-residue polypeptide: Zinc finger CCCH domain-containing protein 43 (448 aa).

Residues 1–106 (MVNSEEIADG…GWSENESENV (106 aa)) form a disordered region. Over residues 24–45 (SSHDRSLSDLNHAAEDLSDKLK) the composition is skewed to basic and acidic residues. Positions 63 to 79 (VSESNGGLDSNAVVTIN) are enriched in polar residues. A compositionally biased stretch (acidic residues) spans 80–89 (QEEEEEEEDR). 5 C3H1-type zinc fingers span residues 110–138 (RPGA…HPLA), 158–186 (KLGL…HTIP), 204–232 (RPGE…HPDP), 346–374 (RPDQ…HPKN), and 392–420 (RPDQ…HSVQ). Positions 424 to 448 (STESSQAIVEPPQVSANGNESDGWN) are disordered. Residues 437 to 448 (VSANGNESDGWN) are compositionally biased toward polar residues.

It localises to the nucleus. The chain is Zinc finger CCCH domain-containing protein 43 from Arabidopsis thaliana (Mouse-ear cress).